Here is a 67-residue protein sequence, read N- to C-terminus: MSSLPVMVLFGLSFPPVFFVLMVSLTLFFVVNRLLQPTGIYDFVWHPALFNSALFCCLFYLLFRYGL.

Helical transmembrane passes span 10-30 (FGLSFPPVFFVLMVSLTLFFV) and 43-63 (FVWHPALFNSALFCCLFYLLF).

Belongs to the AaeX family.

The protein localises to the cell membrane. The protein is Protein AaeX of Pectobacterium atrosepticum (strain SCRI 1043 / ATCC BAA-672) (Erwinia carotovora subsp. atroseptica).